A 164-amino-acid chain; its full sequence is Interleukin-36 beta (164 aa).

The propeptide occupies 1–4; it reads MNPQ.

The protein belongs to the IL-1 family. As to quaternary structure, interacts with cargo receptor TMED10; the interaction mediates the translocation from the cytoplasm into the ERGIC (endoplasmic reticulum-Golgi intermediate compartment) and thereby secretion. In terms of processing, N-terminal truncation leads to a dramatic enhancement of its activity (&gt;1000-fold). In terms of tissue distribution, expression at low levels in tonsil, bone marrow, heart, placenta, lung, testis and colon but not in any hematopoietic cell lines. Not detected in adipose tissue. Expressed at higher levels in psoriatic plaques than in symptomless psoriatic skin or healthy control skin. Increased levels are not detected in inflamed joint tissue.

The protein resides in the cytoplasm. It is found in the secreted. Functionally, cytokine that binds to and signals through the IL1RL2/IL-36R receptor which in turn activates NF-kappa-B and MAPK signaling pathways in target cells linked to a pro-inflammatory response. Part of the IL-36 signaling system that is thought to be present in epithelial barriers and to take part in local inflammatory response; similar to the IL-1 system with which it shares the coreceptor IL1RAP. Stimulates production of interleukin-6 and interleukin-8 in synovial fibrobasts, articular chondrocytes and mature adipocytes. Induces expression of a number of antimicrobial peptides including beta-defensins 4 and 103 as well as a number of matrix metalloproteases. Seems to be involved in skin inflammatory response by acting on keratinocytes, dendritic cells and indirectly on T-cells to drive tissue infiltration, cell maturation and cell proliferation. In cultured keratinocytes induces the expression of macrophage, T-cell, and neutrophil chemokines, such as CCL3, CCL4, CCL5, CCL2, CCL17, CCL22, CL20, CCL5, CCL2, CCL17, CCL22, CXCL8, CCL20 and CXCL1, and the production of pro-inflammatory cytokines such as TNF-alpha, IL-8 and IL-6. This chain is Interleukin-36 beta, found in Homo sapiens (Human).